Here is a 445-residue protein sequence, read N- to C-terminus: Questin oxidase (445 aa).

The protein belongs to the questin oxidase family. The cofactor is NADPH. In terms of tissue distribution, specifically expressed in conidia.

Its pathway is secondary metabolite biosynthesis. Functionally, questin oxidase; part of the gene cluster that mediates the biosynthesis of trypacidin, a mycotoxin with antiprotozoal activity and that plays a role in the infection process. The pathway begins with the synthesis of atrochrysone thioester by the polyketide synthase (PKS) tpcC. The atrochrysone carboxyl ACP thioesterase tpcB then breaks the thioester bond and releases the atrochrysone carboxylic acid from tpcC. The decarboxylase tpcK converts atrochrysone carboxylic acid to atrochrysone which is further reduced into emodin anthrone. The next step is performed by the emodin anthrone oxygenase tpcL that catalyzes the oxidation of emodinanthrone to emodin. Emodin O-methyltransferase encoded by tpcA catalyzes methylation of the 8-hydroxy group of emodin to form questin. Ring cleavage of questin by questin oxidase tpcI leads to desmethylsulochrin via several intermediates including questin epoxide. Another methylation step catalyzed by tpcM leads to the formation of sulochrin which is further converted to monomethylsulfochrin by tpcH. Finally, the tpcJ catalyzes the conversion of monomethylsulfochrin to trypacidin. Trypacidin is toxic for human pulmonary and bronchial epithelial cells by initiating the intracellular formation of nitric oxide (NO) and hydrogen peroxide (H(2)O(2)), thus triggering host necrotic cell death. The trypacidin pathway is also able to produce endocrocin via a distinct route from the endocrocin Enc pathway. This is Questin oxidase from Aspergillus fumigatus (strain ATCC MYA-4609 / CBS 101355 / FGSC A1100 / Af293) (Neosartorya fumigata).